A 445-amino-acid chain; its full sequence is 4-hydroxyphenylpyruvate dioxygenase (445 aa).

Residues 1 to 11 show a composition bias toward polar residues; it reads MGHQNAAVSEN. The interval 1–20 is disordered; that stretch reads MGHQNAAVSENQNHDDGAAS. VOC domains follow at residues 46 to 192 and 223 to 383; these read RFHH…YVSY and RLDH…IFTK. Positions 226, 308, and 394 each coordinate Fe cation.

The protein belongs to the 4HPPD family. As to quaternary structure, homodimer. It depends on Fe cation as a cofactor.

The protein resides in the cytoplasm. The enzyme catalyses 3-(4-hydroxyphenyl)pyruvate + O2 = homogentisate + CO2. It participates in amino-acid degradation; L-phenylalanine degradation; acetoacetate and fumarate from L-phenylalanine: step 3/6. Its pathway is cofactor biosynthesis; prenylquinone biosynthesis. Its function is as follows. Catalyzes the conversion of 4-hydroxyphenylpyruvic acid to homogentisic acid, one of the steps in tyrosine catabolism. The sequence is that of 4-hydroxyphenylpyruvate dioxygenase (HPD) from Arabidopsis thaliana (Mouse-ear cress).